The sequence spans 386 residues: MGQREMWRLMSRFNAFKRTNTILHHLRMSKHTDAAEEVLLEKKGCTGVITLNRPKFLNALTLNMIRQIYPQLKKWEQDPETFLIIIKGAGGKAFCAGGDIRVISEAEKAKQKIAPVFFREEYMLNNAVGSCQKPYVALIHGITMGGGVGLSVHGQFRVATEKCLFAMPETAIGLFPDVGGGYFLPRLQGKLGYFLALTGFRLKGRDVYRAGIATHFVDSEKLAMLEEDLLALKSPSKENIASVLENYHTESKIDRDKSFILEEHMDKINSCFSANTVEEIIENLQQDGSSFALEQLKVINKMSPTSLKITLRQLMEGSSKTLQEVLTMEYRLSQACMRGHDFHEGVRAVLIDKDQSPKWKPADLKEVTEEDLNNHFKSLGSSDLKF.

The N-terminal 32 residues, 1-32 (MGQREMWRLMSRFNAFKRTNTILHHLRMSKHT), are a transit peptide targeting the mitochondrion. Lysine 55 and lysine 92 each carry N6-acetyllysine; alternate. N6-succinyllysine; alternate occurs at positions 55 and 92. Positions 121, 146, 169, and 177 each coordinate substrate. Lysine 221 is modified (N6-acetyllysine; alternate). The residue at position 221 (lysine 221) is an N6-succinyllysine; alternate. Serine 234 is subject to Phosphoserine. Lysine 257 is modified (N6-succinyllysine). Lysine 297 is modified (N6-acetyllysine; alternate). At lysine 297 the chain carries N6-succinyllysine; alternate. An N6-succinyllysine modification is found at lysine 301. Lysine 353 carries the N6-acetyllysine; alternate modification. The residue at position 353 (lysine 353) is an N6-succinyllysine; alternate. A Phosphoserine modification is found at serine 356. Lysine 360 and lysine 365 each carry N6-acetyllysine. Lysine 377 bears the N6-succinyllysine mark.

Belongs to the enoyl-CoA hydratase/isomerase family. Highly expressed in liver and kidney, also detected in heart, muscle and brain (at protein level). Not detected in lung.

It localises to the mitochondrion. It catalyses the reaction 3-hydroxy-2-methylpropanoyl-CoA + H2O = 3-hydroxy-2-methylpropanoate + CoA + H(+). It functions in the pathway amino-acid degradation; L-valine degradation. Hydrolyzes 3-hydroxyisobutyryl-CoA (HIBYL-CoA), a saline catabolite. Has high activity toward isobutyryl-CoA. Could be an isobutyryl-CoA dehydrogenase that functions in valine catabolism. Also hydrolyzes 3-hydroxypropanoyl-CoA. This Homo sapiens (Human) protein is 3-hydroxyisobutyryl-CoA hydrolase, mitochondrial (HIBCH).